An 847-amino-acid polypeptide reads, in one-letter code: Alanine--tRNA ligase (847 aa).

Zn(2+) contacts are provided by histidine 554, histidine 558, cysteine 656, and histidine 660.

The protein belongs to the class-II aminoacyl-tRNA synthetase family. Zn(2+) serves as cofactor.

It is found in the cytoplasm. The enzyme catalyses tRNA(Ala) + L-alanine + ATP = L-alanyl-tRNA(Ala) + AMP + diphosphate. Catalyzes the attachment of alanine to tRNA(Ala) in a two-step reaction: alanine is first activated by ATP to form Ala-AMP and then transferred to the acceptor end of tRNA(Ala). Also edits incorrectly charged Ser-tRNA(Ala) and Gly-tRNA(Ala) via its editing domain. The chain is Alanine--tRNA ligase from Helicobacter pylori (strain ATCC 700392 / 26695) (Campylobacter pylori).